The sequence spans 520 residues: 2-isopropylmalate synthase (520 aa).

One can recognise a Pyruvate carboxyltransferase domain in the interval 12–274 (VVIFDTTLRD…WCNVESTMLT (263 aa)). Residues Asp-21, His-209, His-211, and Asn-245 each contribute to the Mn(2+) site. The regulatory domain stretch occupies residues 398–520 (KLTSLTVIAG…RDVPSAAAAS (123 aa)).

The protein belongs to the alpha-IPM synthase/homocitrate synthase family. LeuA type 1 subfamily. Homodimer. Mn(2+) serves as cofactor.

It localises to the cytoplasm. The enzyme catalyses 3-methyl-2-oxobutanoate + acetyl-CoA + H2O = (2S)-2-isopropylmalate + CoA + H(+). It functions in the pathway amino-acid biosynthesis; L-leucine biosynthesis; L-leucine from 3-methyl-2-oxobutanoate: step 1/4. Catalyzes the condensation of the acetyl group of acetyl-CoA with 3-methyl-2-oxobutanoate (2-ketoisovalerate) to form 3-carboxy-3-hydroxy-4-methylpentanoate (2-isopropylmalate). The chain is 2-isopropylmalate synthase from Nitrobacter hamburgensis (strain DSM 10229 / NCIMB 13809 / X14).